The primary structure comprises 227 residues: PKHD-type hydroxylase Mnod_1077 (227 aa).

One can recognise a Fe2OG dioxygenase domain in the interval arginine 78 to serine 178. 3 residues coordinate Fe cation: histidine 96, aspartate 98, and histidine 159. A 2-oxoglutarate-binding site is contributed by arginine 169.

Fe(2+) is required as a cofactor. It depends on L-ascorbate as a cofactor.

This is PKHD-type hydroxylase Mnod_1077 from Methylobacterium nodulans (strain LMG 21967 / CNCM I-2342 / ORS 2060).